The chain runs to 142 residues: Ribonuclease VapC25 (142 aa).

Residues 3–139 (LIDVNVLLAA…ARFASVRHIR (137 aa)) form the PINc domain. Asp-5 and Asp-108 together coordinate Mg(2+).

Belongs to the PINc/VapC protein family. Mg(2+) serves as cofactor.

In terms of biological role, toxic component of a type II toxin-antitoxin (TA) system. An RNase. Upon expression in M.smegmatis inhibits colony formation. Its toxic effect is neutralized by coexpression with cognate antitoxin VapB25. The chain is Ribonuclease VapC25 from Mycobacterium tuberculosis (strain ATCC 25618 / H37Rv).